Here is a 315-residue protein sequence, read N- to C-terminus: tRNA-cytidine(32) 2-sulfurtransferase (315 aa).

The PP-loop motif motif lies at 39–44 (SGGKDS). The [4Fe-4S] cluster site is built by Cys-114, Cys-117, and Cys-205.

It belongs to the TtcA family. Homodimer. Mg(2+) is required as a cofactor. It depends on [4Fe-4S] cluster as a cofactor.

The protein localises to the cytoplasm. The enzyme catalyses cytidine(32) in tRNA + S-sulfanyl-L-cysteinyl-[cysteine desulfurase] + AH2 + ATP = 2-thiocytidine(32) in tRNA + L-cysteinyl-[cysteine desulfurase] + A + AMP + diphosphate + H(+). The protein operates within tRNA modification. In terms of biological role, catalyzes the ATP-dependent 2-thiolation of cytidine in position 32 of tRNA, to form 2-thiocytidine (s(2)C32). The sulfur atoms are provided by the cysteine/cysteine desulfurase (IscS) system. This chain is tRNA-cytidine(32) 2-sulfurtransferase, found in Ralstonia pickettii (strain 12J).